The chain runs to 143 residues: Ribosome-binding factor A (143 aa).

A disordered region spans residues 123-143 (DNSLQENYKDSDKETKVEKLR).

Belongs to the RbfA family. Monomer. Binds 30S ribosomal subunits, but not 50S ribosomal subunits or 70S ribosomes.

Its subcellular location is the cytoplasm. In terms of biological role, one of several proteins that assist in the late maturation steps of the functional core of the 30S ribosomal subunit. Associates with free 30S ribosomal subunits (but not with 30S subunits that are part of 70S ribosomes or polysomes). Required for efficient processing of 16S rRNA. May interact with the 5'-terminal helix region of 16S rRNA. The chain is Ribosome-binding factor A from Francisella philomiragia subsp. philomiragia (strain ATCC 25017 / CCUG 19701 / FSC 153 / O#319-036).